Here is a 339-residue protein sequence, read N- to C-terminus: UDP-galactose transporter homolog 1 (339 aa).

The next 9 membrane-spanning stretches (helical) occupy residues 5 to 25 (ILKH…WGLL), 43 to 63 (VPYI…LIYI), 91 to 111 (AISA…TYML), 138 to 158 (LVVL…HKPS), 171 to 191 (SSLI…LTNA), 208 to 228 (HLMF…MVLV), 246 to 268 (ISRY…FYTL), 273 to 295 (SLVL…IIVY), and 301 to 321 (LWQW…SMGK).

Belongs to the nucleotide-sugar transporter family. SLC35B subfamily.

The protein localises to the endoplasmic reticulum membrane. In terms of biological role, may be involved in specific transport of UDP-Gal from the cytosol to the Golgi lumen. Involved in the maintenance of optimal conditions for the folding of secretory pathway proteins in the endoplasmic reticulum. This chain is UDP-galactose transporter homolog 1 (HUT1), found in Kluyveromyces lactis (strain ATCC 8585 / CBS 2359 / DSM 70799 / NBRC 1267 / NRRL Y-1140 / WM37) (Yeast).